Reading from the N-terminus, the 588-residue chain is Lamin-B1 (588 aa).

The segment covering 1–12 (MATATPVQQQRA) has biased composition (polar residues). The segment at 1-34 (MATATPVQQQRAGSRASAPATPLSPTRLSRLQEK) is disordered. Ala2 carries the post-translational modification N-acetylalanine. The interval 2 to 35 (ATATPVQQQRAGSRASAPATPLSPTRLSRLQEKE) is head. Thr3 and Thr5 each carry phosphothreonine. Arg15 carries the post-translational modification Omega-N-methylarginine. Residue Ser17 is modified to Phosphoserine. Thr21 is modified (phosphothreonine). Position 24 is a phosphoserine (Ser24). The residue at position 26 (Thr26) is a Phosphothreonine. Phosphoserine is present on Ser29. The IF rod domain occupies 33–389 (EKEELRELND…KLLEGEEERL (357 aa)). Residues 36 to 70 (ELRELNDRLAVYIDKVRSLETENSALQLQVTEREE) form a coil 1A region. The interval 71 to 82 (VRGRELTGLKAL) is linker 1. The tract at residues 83 to 216 (YETELADARR…EFRKNMYEEE (134 aa)) is coil 1B. A Glycyl lysine isopeptide (Lys-Gly) (interchain with G-Cter in SUMO2) cross-link involves residue Lys103. An N6-acetyllysine modification is found at Lys112. Lys124 participates in a covalent cross-link: Glycyl lysine isopeptide (Lys-Gly) (interchain with G-Cter in SUMO2). Position 127 is a phosphoserine (Ser127). Lys146 participates in a covalent cross-link: Glycyl lysine isopeptide (Lys-Gly) (interchain with G-Cter in SUMO2). Lys158 is subject to N6-acetyllysine; alternate. Lys158 participates in a covalent cross-link: Glycyl lysine isopeptide (Lys-Gly) (interchain with G-Cter in SUMO2); alternate. A Phosphoserine modification is found at Ser159. Residue Lys182 forms a Glycyl lysine isopeptide (Lys-Gly) (interchain with G-Cter in SUMO2) linkage. Residues Ser201 and Ser233 each carry the phosphoserine modification. The segment at 217–244 (INETRRKHETRLVEVDSGRQIEYEYKLA) is linker 2. Residues Lys242 and Lys262 each participate in a glycyl lysine isopeptide (Lys-Gly) (interchain with G-Cter in SUMO2) cross-link. A coil 2 region spans residues 245–387 (QALHEMREQH…YRKLLEGEEE (143 aa)). Residue Lys272 is modified to N6-acetyllysine; alternate. Lys272 is covalently cross-linked (Glycyl lysine isopeptide (Lys-Gly) (interchain with G-Cter in SUMO2); alternate). Phosphoserine is present on residues Ser279 and Ser303. Lys313 is covalently cross-linked (Glycyl lysine isopeptide (Lys-Gly) (interchain with G-Cter in SUMO2)). Lys331 is modified (N6-acetyllysine; alternate). Lys331 is covalently cross-linked (Glycyl lysine isopeptide (Lys-Gly) (interchain with G-Cter in SUMO2); alternate). Phosphoserine occurs at positions 376 and 394. The interval 388-588 (RLKLSPSPSS…RASNKSCAIM (201 aa)) is tail. Over residues 391–410 (LSPSPSSRVTVSRASSSRSV) the composition is skewed to low complexity. The disordered stretch occupies residues 391 to 433 (LSPSPSSRVTVSRASSSRSVRTTRGKRKRVDVEESEASSSVSI). Residue Thr400 is glycosylated (O-linked (GlcNAc) threonine). An Omega-N-methylarginine modification is found at Arg414. The short motif at 416-421 (KRKRVD) is the Nuclear localization signal element. An LTD domain is found at 431–547 (VSISHSASAT…EEVAQRSTVF (117 aa)). Lys484 is subject to N6-acetyllysine. A Glycyl lysine isopeptide (Lys-Gly) (interchain with G-Cter in SUMO2) cross-link involves residue Lys533. Ser535 carries the phosphoserine modification. Lys548 is covalently cross-linked (Glycyl lysine isopeptide (Lys-Gly) (interchain with G-Cter in SUMO2)). Cys585 bears the Cysteine methyl ester mark. Cys585 is lipidated: S-farnesyl cysteine. A propeptide spans 586–588 (AIM) (removed in mature form).

The protein belongs to the intermediate filament family. As to quaternary structure, homodimer. Lamin dimers then assemble into dimeric head-to-tail polymers. Ultimately, two head-to-tail polymers assemble laterally into a protofilament with a uniformly shaped rod of 3.5 nm in diameter. Interacts with SPAG4 and SEPT12. Post-translationally, B-type lamins undergo a series of modifications, such as farnesylation and phosphorylation. Increased phosphorylation of the lamins occurs before envelope disintegration and probably plays a role in regulating lamin associations. Phosphorylation plays a key role in lamin organization, subcellular localization and nuclear envelope disintegration. Phosphorylation by CDK1 at Ser-24 and Ser-394 at the onset of mitosis drives lamin disassembly and nuclear envelope breakdown.

The protein resides in the nucleus lamina. Functionally, lamins are intermediate filament proteins that assemble into a filamentous meshwork, and which constitute the major components of the nuclear lamina, a fibrous layer on the nucleoplasmic side of the inner nuclear membrane. Lamins provide a framework for the nuclear envelope, bridging the nuclear envelope and chromatin, thereby playing an important role in nuclear assembly, chromatin organization, nuclear membrane and telomere dynamics. The structural integrity of the lamina is strictly controlled by the cell cycle, as seen by the disintegration and formation of the nuclear envelope in prophase and telophase, respectively. The sequence is that of Lamin-B1 (Lmnb1) from Mus musculus (Mouse).